Consider the following 836-residue polypeptide: CUB domain-containing protein 1 (836 aa).

Residues M1–A29 form the signal peptide. Topologically, residues F30–T667 are extracellular. Residues N39, N122, N180, N205, N270, N310, and N386 are each glycosylated (N-linked (GlcNAc...) asparagine). The region spanning C417–E544 is the CUB domain. C476 and C499 are disulfide-bonded. A helical transmembrane segment spans residues V668–I688. Residues C689–E836 lie on the Cytoplasmic side of the membrane. The residue at position 734 (Y734) is a Phosphotyrosine. A disordered region spans residues P776–E836.

As to quaternary structure, interacts with CDH2/N-cadherin, CDH3/P-cadherin, SDC1/syndecan-1, SDC4/syndecan-4 and the serine protease ST14/MT-SP1. Also interacts with SRC and PRKCG/protein kinase C gamma. In terms of processing, phosphorylated on tyrosine by kinases of the SRC family such as SRC and YES as well as by the protein kinase C gamma/PRKCG. Dephosphorylated by phosphotyrosine phosphatases. Also phosphorylated by suramin, a heparin analog. Tyrosine phosphorylated in response to dissociation of integrin alpha-6 beta-4 from laminin-5. Post-translationally, N-glycosylated. A soluble form may also be produced by proteolytic cleavage at the cell surface (shedding). Another peptide of 80 kDa (p80) is present in cultured keratinocytes probably due to tryptic cleavage at an unidentified site on its N-terminal side. Converted to p80 by plasmin, a trypsin-like protease. As to expression, highly expressed in mitotic cells with low expression during interphase. Detected at highest levels in skeletal muscle and colon with lower levels in kidney, small intestine, placenta and lung. Up-regulated in a number of human tumor cell lines, as well as in colorectal cancer, breast carcinoma and lung cancer. Also expressed in cells with phenotypes reminiscent of mesenchymal stem cells and neural stem cells.

The protein resides in the cell membrane. It is found in the secreted. May be involved in cell adhesion and cell matrix association. May play a role in the regulation of anchorage versus migration or proliferation versus differentiation via its phosphorylation. May be a novel marker for leukemia diagnosis and for immature hematopoietic stem cell subsets. Belongs to the tetraspanin web involved in tumor progression and metastasis. The protein is CUB domain-containing protein 1 (CDCP1) of Homo sapiens (Human).